Here is a 327-residue protein sequence, read N- to C-terminus: GTPase Obg (327 aa).

The 159-residue stretch at 2–160 folds into the Obg domain; sequence HLFKDSLNLI…LNLRLELSLI (159 aa). The OBG-type G domain occupies 161–326; that stretch reads ADVGLVGLPN…LVSEFFSLAK (166 aa). GTP is bound by residues 167–174, 192–196, 213–216, 280–283, and 307–309; these read GLPNAGKS, FTTKI, DLPG, SKLD, and SIY. Positions 174 and 194 each coordinate Mg(2+).

Belongs to the TRAFAC class OBG-HflX-like GTPase superfamily. OBG GTPase family. As to quaternary structure, monomer. Requires Mg(2+) as cofactor.

The protein localises to the cytoplasm. An essential GTPase which binds GTP, GDP and possibly (p)ppGpp with moderate affinity, with high nucleotide exchange rates and a fairly low GTP hydrolysis rate. Plays a role in control of the cell cycle, stress response, ribosome biogenesis and in those bacteria that undergo differentiation, in morphogenesis control. This Borrelia recurrentis (strain A1) protein is GTPase Obg.